The primary structure comprises 141 residues: Putative pre-16S rRNA nuclease (141 aa).

This sequence belongs to the YqgF nuclease family.

It localises to the cytoplasm. Could be a nuclease involved in processing of the 5'-end of pre-16S rRNA. This Roseiflexus sp. (strain RS-1) protein is Putative pre-16S rRNA nuclease.